Reading from the N-terminus, the 102-residue chain is Large ribosomal subunit protein bL28 (102 aa).

The interval Met-1–His-20 is disordered.

Belongs to the bacterial ribosomal protein bL28 family.

This Bradyrhizobium sp. (strain ORS 278) protein is Large ribosomal subunit protein bL28.